Here is a 247-residue protein sequence, read N- to C-terminus: Caffeoyl-CoA O-methyltransferase 1 (247 aa).

K21 is a substrate binding site. S-adenosyl-L-methionine is bound by residues T63, E85, G87–V88, S93, D111, and A140. Residue D163 participates in substrate binding. D163 is a binding site for a divalent metal cation. D165 provides a ligand contact to S-adenosyl-L-methionine. Residues D189 and N190 each contribute to the a divalent metal cation site. N194 is a substrate binding site.

The protein belongs to the class I-like SAM-binding methyltransferase superfamily. Cation-dependent O-methyltransferase family. CCoAMT subfamily. A divalent metal cation serves as cofactor.

It carries out the reaction (E)-caffeoyl-CoA + S-adenosyl-L-methionine = (E)-feruloyl-CoA + S-adenosyl-L-homocysteine + H(+). Its pathway is aromatic compound metabolism; phenylpropanoid biosynthesis. Methylates caffeoyl-CoA to feruloyl-CoA and 5-hydroxyferuloyl-CoA to sinapoyl-CoA. Plays a role in the synthesis of feruloylated polysaccharides. Involved in the reinforcement of the plant cell wall. Also involved in the responding to wounding or pathogen challenge by the increased formation of cell wall-bound ferulic acid polymers. The sequence is that of Caffeoyl-CoA O-methyltransferase 1 (CCOAOMT1) from Populus trichocarpa (Western balsam poplar).